Consider the following 236-residue polypeptide: Phosphoribosylaminoimidazole-succinocarboxamide synthase (236 aa).

It belongs to the SAICAR synthetase family.

The catalysed reaction is 5-amino-1-(5-phospho-D-ribosyl)imidazole-4-carboxylate + L-aspartate + ATP = (2S)-2-[5-amino-1-(5-phospho-beta-D-ribosyl)imidazole-4-carboxamido]succinate + ADP + phosphate + 2 H(+). Its pathway is purine metabolism; IMP biosynthesis via de novo pathway; 5-amino-1-(5-phospho-D-ribosyl)imidazole-4-carboxamide from 5-amino-1-(5-phospho-D-ribosyl)imidazole-4-carboxylate: step 1/2. This chain is Phosphoribosylaminoimidazole-succinocarboxamide synthase, found in Wolinella succinogenes (strain ATCC 29543 / DSM 1740 / CCUG 13145 / JCM 31913 / LMG 7466 / NCTC 11488 / FDC 602W) (Vibrio succinogenes).